We begin with the raw amino-acid sequence, 338 residues long: Aspartate carbamoyltransferase catalytic subunit (338 aa).

Positions 59 and 60 each coordinate carbamoyl phosphate. K87 serves as a coordination point for L-aspartate. 3 residues coordinate carbamoyl phosphate: R109, H142, and Q145. L-aspartate-binding residues include R182 and R253. 2 residues coordinate carbamoyl phosphate: G294 and P295.

Belongs to the aspartate/ornithine carbamoyltransferase superfamily. ATCase family. As to quaternary structure, heterododecamer (2C3:3R2) of six catalytic PyrB chains organized as two trimers (C3), and six regulatory PyrI chains organized as three dimers (R2).

The enzyme catalyses carbamoyl phosphate + L-aspartate = N-carbamoyl-L-aspartate + phosphate + H(+). Its pathway is pyrimidine metabolism; UMP biosynthesis via de novo pathway; (S)-dihydroorotate from bicarbonate: step 2/3. In terms of biological role, catalyzes the condensation of carbamoyl phosphate and aspartate to form carbamoyl aspartate and inorganic phosphate, the committed step in the de novo pyrimidine nucleotide biosynthesis pathway. This is Aspartate carbamoyltransferase catalytic subunit from Prochlorococcus marinus (strain AS9601).